The primary structure comprises 381 residues: uncharacterized protein (381 aa).

9 helical membrane-spanning segments follow: residues 59–79 (LITL…LYYM), 84–104 (GVAP…YQTM), 147–167 (VGVN…FFMA), 190–210 (SMMA…FNTI), 222–242 (LVLL…TFSI), 250–270 (ILTN…SIYW), 284–304 (HYFM…LILA), 311–331 (LSPI…IYKF), and 344–364 (VYFF…VTSL).

The protein belongs to the CDP-alcohol phosphatidyltransferase class-I family.

The protein localises to the membrane. This is an uncharacterized protein from Dictyostelium discoideum (Social amoeba).